A 571-amino-acid chain; its full sequence is Proline--tRNA ligase (571 aa).

Belongs to the class-II aminoacyl-tRNA synthetase family. ProS type 1 subfamily. In terms of assembly, homodimer.

Its subcellular location is the cytoplasm. It catalyses the reaction tRNA(Pro) + L-proline + ATP = L-prolyl-tRNA(Pro) + AMP + diphosphate. Functionally, catalyzes the attachment of proline to tRNA(Pro) in a two-step reaction: proline is first activated by ATP to form Pro-AMP and then transferred to the acceptor end of tRNA(Pro). As ProRS can inadvertently accommodate and process non-cognate amino acids such as alanine and cysteine, to avoid such errors it has two additional distinct editing activities against alanine. One activity is designated as 'pretransfer' editing and involves the tRNA(Pro)-independent hydrolysis of activated Ala-AMP. The other activity is designated 'posttransfer' editing and involves deacylation of mischarged Ala-tRNA(Pro). The misacylated Cys-tRNA(Pro) is not edited by ProRS. This is Proline--tRNA ligase from Haemophilus ducreyi (strain 35000HP / ATCC 700724).